Consider the following 299-residue polypeptide: Ribosomal RNA small subunit methyltransferase H (299 aa).

S-adenosyl-L-methionine contacts are provided by residues 36–38 (GGH), Asp-55, Asp-103, and Gln-110. Basic and acidic residues-rich tracts occupy residues 268 to 282 (KPVR…ENPR) and 289 to 299 (RAAERIEKGGD). Residues 268-299 (KPVRPSEEEIRENPRARSGRLRAAERIEKGGD) are disordered.

This sequence belongs to the methyltransferase superfamily. RsmH family.

It localises to the cytoplasm. It catalyses the reaction cytidine(1402) in 16S rRNA + S-adenosyl-L-methionine = N(4)-methylcytidine(1402) in 16S rRNA + S-adenosyl-L-homocysteine + H(+). Functionally, specifically methylates the N4 position of cytidine in position 1402 (C1402) of 16S rRNA. The sequence is that of Ribosomal RNA small subunit methyltransferase H from Thermotoga petrophila (strain ATCC BAA-488 / DSM 13995 / JCM 10881 / RKU-1).